The sequence spans 199 residues: Probable GTP-binding protein EngB (199 aa).

In terms of domain architecture, EngB-type G spans 28 to 199 (DIPEIALAGR…QAWDAILEQI (172 aa)). Residues 36–43 (GRSNVGKS), 63–67 (GKTQL), 81–84 (DVPG), 148–151 (TKAD), and 180–182 (FSS) contribute to the GTP site. Serine 43 and threonine 65 together coordinate Mg(2+).

It belongs to the TRAFAC class TrmE-Era-EngA-EngB-Septin-like GTPase superfamily. EngB GTPase family. It depends on Mg(2+) as a cofactor.

Necessary for normal cell division and for the maintenance of normal septation. The chain is Probable GTP-binding protein EngB from Streptococcus uberis (strain ATCC BAA-854 / 0140J).